We begin with the raw amino-acid sequence, 408 residues long: MQPYHTLSRVLPFPDANQKAWWDKLGPMLLKAMQSQGYDTEAQYAQLGMVYKCVLPYLGEFPTVENDATRWKSFLCPYGIPIEPSLNISQGILRYAFEPIGPDVGTEKDPQNMNIIQDCLKGLTQHDDRIDTTLHAEFSSRLLLTEEESRQFATTGQFNFGPGQGMHGFAVDLKGSRPMFKGYFCAGIKSVVTGIPTGKLMLDAVREVDTEGRITQPLDKLEEYSANGIGKLMLCFMSVDMVNPHDARIKMYGLQQEVSREGIVDLWTLGGRVNTPTNQEGLELLLELWDLLQIPAGPRSVAISHCSVGQPPEYMLPTLVNWTLLPGHSDPMPQVYLVPFGLPDSHISDCLVTFFERRGWTDLARDYKKNLASYFPDIDFTQSRHVQEAISFSFRKGKPYLSIYMSLF.

Dimethylallyl diphosphate-binding residues include R94, K181, Y183, R248, K250, Y252, Q334, Y336, Y400, and Y404.

Belongs to the tryptophan dimethylallyltransferase family.

The catalysed reaction is preechinulin + dimethylallyl diphosphate = tardioxopiperazine B + diphosphate. The enzyme catalyses preechinulin + dimethylallyl diphosphate = tardioxopiperazine A + diphosphate. It carries out the reaction tardioxopiperazine A + dimethylallyl diphosphate = echinulin + diphosphate. It catalyses the reaction tardioxopiperazine A + dimethylallyl diphosphate = variecolorin L + diphosphate. The catalysed reaction is neoechinulin A + dimethylallyl diphosphate = variecolorin G + diphosphate. The enzyme catalyses neoechinulin A + dimethylallyl diphosphate = isoechinulin A + diphosphate. It carries out the reaction isoechinulin A + dimethylallyl diphosphate = dehydroechinulin + diphosphate. It catalyses the reaction neoechinulin B + dimethylallyl diphosphate = isoechinulin B + diphosphate. It functions in the pathway secondary metabolite biosynthesis. It participates in alkaloid biosynthesis. Its function is as follows. Prenyltransferase; part of the gene cluster that mediates the biosynthesis of echinulin family alkaloid. The pathway begins with the biosynthesis of the cyclic dipeptide cyclo-L-Trp-L-Ala (cyclo-TA) by the NRPS echPS via condensation of L-alanine and L-tryptophan. The prenyltransferase echPT1 then catalyzes the first prenylation step, a reverse prenylation reaction at C2, to yield preechinulin. Preechinulin is the substrate of the cytochrome P450 monooxygenase echP450 that catalyzes the formation of the double bond between C10 and C11 to produce neoechulin A. The unique prenyltransferase echPT2 functions as a competitive enzyme with echP450 for preechinulin metabolization and uses preechinulin for effective regiospecific prenylations. Preechinulin is prenylated by echPT2 at C5 or C7. C7-prenylation leads to accumulation of tardioxopiperazine B without further modification by echPT2. In contrast, the C5-prenylated tardioxopiperazine A can be prenylated again by echPT2, predominantly at C7 to form echinulin or less frequently at C4 to give variecolorin L. EchPT2 also accepts neoechilunin A to produce varlecolorin G (prenylation at C5) or isoechinulin A (prenylation at C7). EchPT2 further converts isoechinulin A into dehydroechinulin. Moreover, a yet unidentified enzyme can also convert neoechilunin A into neoechilunin B by introducing a double bond between positions C14 and C17 and thus provides a further substrate to echPT2 for C5 and C7 prenylation. The sequence is that of Echinulin prenyltransferase 2 from Aspergillus ruber (Eurotium rubrum).